Here is a 336-residue protein sequence, read N- to C-terminus: Biotin synthase (336 aa).

Positions 51–270 (NQVQCNQLLN…IALARIMMPK (220 aa)) constitute a Radical SAM core domain. 3 residues coordinate [4Fe-4S] cluster: C66, C70, and C73. [2Fe-2S] cluster contacts are provided by C110, C141, C201, and R274.

It belongs to the radical SAM superfamily. Biotin synthase family. As to quaternary structure, homodimer. [4Fe-4S] cluster is required as a cofactor. Requires [2Fe-2S] cluster as cofactor.

The enzyme catalyses (4R,5S)-dethiobiotin + (sulfur carrier)-SH + 2 reduced [2Fe-2S]-[ferredoxin] + 2 S-adenosyl-L-methionine = (sulfur carrier)-H + biotin + 2 5'-deoxyadenosine + 2 L-methionine + 2 oxidized [2Fe-2S]-[ferredoxin]. Its pathway is cofactor biosynthesis; biotin biosynthesis; biotin from 7,8-diaminononanoate: step 2/2. Catalyzes the conversion of dethiobiotin (DTB) to biotin by the insertion of a sulfur atom into dethiobiotin via a radical-based mechanism. This Rhodopseudomonas palustris (strain ATCC BAA-98 / CGA009) protein is Biotin synthase.